A 209-amino-acid polypeptide reads, in one-letter code: tRNA (guanine-N(7)-)-methyltransferase (209 aa).

S-adenosyl-L-methionine is bound by residues Asp35, Glu60, Asn87, and Asp113. Asp113 is a catalytic residue. Lys117 and Asp149 together coordinate substrate.

The protein belongs to the class I-like SAM-binding methyltransferase superfamily. TrmB family.

It catalyses the reaction guanosine(46) in tRNA + S-adenosyl-L-methionine = N(7)-methylguanosine(46) in tRNA + S-adenosyl-L-homocysteine. It functions in the pathway tRNA modification; N(7)-methylguanine-tRNA biosynthesis. Catalyzes the formation of N(7)-methylguanine at position 46 (m7G46) in tRNA. This Prochlorococcus marinus (strain MIT 9215) protein is tRNA (guanine-N(7)-)-methyltransferase.